The sequence spans 298 residues: Ribosomal RNA processing protein 36 homolog (298 aa).

The segment at 1–131 (MKPDIIKKRR…SDAPVEMTAM (131 aa)) is disordered. Positions 14–56 (SDDEDEYNEEDEMYEDDNNNYEEDEDDDDDDDEDDEDDDENEE) are enriched in acidic residues. Polar residues-rich tracts occupy residues 61-70 (QQLSNVSFSS) and 83-92 (LNLNTITKNL). Coiled coils occupy residues 88–112 (ITKN…MNSK) and 196–228 (RERD…KNKL). Positions 98-111 (FKKEEQQEKEEMNS) are enriched in basic and acidic residues. Positions 279–298 (ISSKEKTFLPQRRSFDQDEN) are disordered.

This sequence belongs to the RRP36 family.

The protein resides in the nucleus. It is found in the nucleolus. In terms of biological role, involved in the early processing steps of the pre-rRNA in the maturation pathway leading to the 18S rRNA. The polypeptide is Ribosomal RNA processing protein 36 homolog (Dictyostelium discoideum (Social amoeba)).